The primary structure comprises 913 residues: Chitin synthase 1 (913 aa).

Residues Met1–Leu135 form a disordered region. N-linked (GlcNAc...) asparagine glycosylation is present at Asn25. Residues Arg41–Gly56 are compositionally biased toward basic and acidic residues. The N-linked (GlcNAc...) asparagine glycan is linked to Asn539. 7 helical membrane-spanning segments follow: residues Phe566–Leu586, Ile625–Ala645, Ile658–Leu678, Val712–Leu732, Ser740–Phe760, Thr840–Asp860, and Phe881–Leu901.

Belongs to the chitin synthase family. Class III subfamily.

The protein resides in the cell membrane. It carries out the reaction [(1-&gt;4)-N-acetyl-beta-D-glucosaminyl](n) + UDP-N-acetyl-alpha-D-glucosamine = [(1-&gt;4)-N-acetyl-beta-D-glucosaminyl](n+1) + UDP + H(+). Functionally, polymerizes chitin, a structural polymer of the cell wall and septum, by transferring the sugar moiety of UDP-GlcNAc to the non-reducing end of the growing chitin polymer. Plays a role in cell wall integrity and is involved in tolerance to hyperosmotic conditions. Required to successfully penetrate the host plants and thus plays a key role in pathogenicity. This is Chitin synthase 1 from Verticillium dahliae (strain VdLs.17 / ATCC MYA-4575 / FGSC 10137) (Verticillium wilt).